A 1432-amino-acid chain; its full sequence is ABC transporter B family member 3 (1432 aa).

2 disordered regions span residues 1-21 (MDDG…EEEI) and 48-149 (ITQP…KTEE). Low complexity-rich tracts occupy residues 52–62 (SNNNNNSNNNN), 76–106 (NNNN…FNNN), and 118–135 (NTNE…NNND). Positions 117 to 163 (ENTNENNNKNNNNNNNNNDDYNDGADERVKTEEEIKKEAENELNQSV) form a coiled coil. The region spanning 180–479 (MFLGTIAAVI…ASPCLALFAQ (300 aa)) is the ABC transmembrane type-1 1 domain. 6 helical membrane-spanning segments follow: residues 185–205 (IAAV…GLVV), 232–252 (LLML…LWMI), 303–323 (KVGR…IGFT), 325–345 (GWQL…GGFF), 410–430 (GLGL…AFWY), and 457–477 (FFAV…LALF). The region spanning 514–750 (IEFKDVGFHY…QGLYFDLVEK (237 aa)) is the ABC transporter 1 domain. An ATP-binding site is contributed by 549-556 (GDSGGGKS). Residues 787-819 (KRSLRKNESESNKKDKEDSNNKKKKKSNKKKVE) form a disordered region. Positions 791 to 807 (RKNESESNKKDKEDSNN) are enriched in basic and acidic residues. The ABC transmembrane type-1 2 domain maps to 837 to 1157 (WCFGFLSAVG…ASSFAPDLAK (321 aa)). The next 6 helical transmembrane spans lie at 838–858 (CFGF…AMVF), 882–902 (LMFV…GFLF), 968–988 (MVGG…VIIA), 989–1009 (CFPL…GFSS), 1060–1080 (ISGF…CLSF), and 1134–1154 (VFFA…FAPD). Residues 1192–1428 (IEFKNLHFSY…EGPYSQLWYN (237 aa)) form the ABC transporter 2 domain. 1227–1234 (GDSGGGKS) is an ATP binding site.

Belongs to the ABC transporter superfamily. ABCB family. Multidrug resistance exporter (TC 3.A.1.201) subfamily.

Its subcellular location is the membrane. This chain is ABC transporter B family member 3 (abcB3), found in Dictyostelium discoideum (Social amoeba).